A 285-amino-acid polypeptide reads, in one-letter code: Heme oxygenase 3, chloroplastic (285 aa).

A chloroplast-targeting transit peptide spans 1 to 58 (MATTRLNPSCHFPASTRLSCESYLGLRTTGRISYARTLTAPRGYLAVKANGGQASVVT). Residue His-89 coordinates heme b. The span at 89 to 105 (HTKDQAREGEKESRSPE) shows a compositional bias: basic and acidic residues. The disordered stretch occupies residues 89 to 109 (HTKDQAREGEKESRSPEEGPV).

The protein belongs to the heme oxygenase family. Widely expressed at low levels.

The protein localises to the plastid. Its subcellular location is the chloroplast. It catalyses the reaction heme b + 3 reduced [NADPH--hemoprotein reductase] + 3 O2 = biliverdin IXalpha + CO + Fe(2+) + 3 oxidized [NADPH--hemoprotein reductase] + 3 H2O + H(+). Its function is as follows. Catalyzes the opening of the heme ring to form the open-chain tetrapyrrole biliverdin IX with the release of iron and carbon monoxide (CO). Produces specifically the biliverdin IX-alpha isomer. Plays a minor role in phytochrome assembly and photomorphogenesis. The polypeptide is Heme oxygenase 3, chloroplastic (HO3) (Arabidopsis thaliana (Mouse-ear cress)).